The following is a 339-amino-acid chain: D-glycero-alpha-D-manno-heptose 7-phosphate kinase (339 aa).

17-20 (GGTD) contacts substrate. ATP is bound by residues Ser57 and 110–116 (GSGLGGS). Mg(2+) is bound by residues Ser116 and Glu148. Residue Asp160 is the Proton acceptor of the active site.

This sequence belongs to the GHMP kinase family.

The catalysed reaction is D-glycero-alpha-D-manno-heptose 7-phosphate + ATP = D-glycero-alpha-D-manno-heptose 1,7-bisphosphate + ADP + H(+). Its pathway is nucleotide-sugar biosynthesis; GDP-D-glycero-alpha-D-manno-heptose biosynthesis; GDP-D-glycero-alpha-D-manno-heptose from D-glycero-alpha-D-manno-heptose 7-phosphate: step 1/3. The protein operates within capsule biogenesis; capsule polysaccharide biosynthesis. Catalyzes the phosphorylation of D-glycero-alpha-D-manno-heptose 7-phosphate at the C-1 position to form D-glycero-alpha-D-manno-heptose 1,7-bisphosphate. This is D-glycero-alpha-D-manno-heptose 7-phosphate kinase from Campylobacter jejuni subsp. jejuni serotype O:2 (strain ATCC 700819 / NCTC 11168).